Reading from the N-terminus, the 353-residue chain is MAASAAVFSRLRSGLRLGSRGLCTRLATPPRRAPDQAAEIGSRGSTKAQGPQQQPGSEGPSYAKKVALWLAGLLGAGGTVSVVYIFGNNPVDENGAKIPDEFDNDPILVQQLRRTYKYFKDYRQMIIEPTSPCLLPDPLQEPYYQPPYTLVLELTGVLLHPEWSLATGWRFKKRPGIETLFQQLAPLYEIVIFTSETGMTAFPLIDSVDPHGFISYRLFRDATRYMDGHHVKDISCLNRDPARVVVVDCKKEAFRLQPYNGVALRPWDGNSDDRVLLDLSAFLKTIALNGVEDVRTVLEHYALEDDPLAAFKQRQSRLEQEEQQRLAELSKSNKQNLFLGSLTSRLWPRSKQP.

A mitochondrion-targeting transit peptide spans 1–44 (MAASAAVFSRLRSGLRLGSRGLCTRLATPPRRAPDQAAEIGSRG). The tract at residues 25–60 (RLATPPRRAPDQAAEIGSRGSTKAQGPQQQPGSEGP) is disordered. Serine 45 carries the post-translational modification Phosphoserine. Over 45 to 65 (STKAQGPQQQPGSEGPSYAKK) the chain is Mitochondrial matrix. Over residues 49-60 (QGPQQQPGSEGP) the composition is skewed to low complexity. Residues 66-86 (VALWLAGLLGAGGTVSVVYIF) form a helical membrane-spanning segment. Residues 87–353 (GNNPVDENGA…SRLWPRSKQP (267 aa)) are Mitochondrial intermembrane-facing. Positions 143–286 (YYQPPYTLVL…LDLSAFLKTI (144 aa)) constitute an FCP1 homology domain. Serine 341 bears the Phosphoserine mark.

The protein belongs to the TIM50 family. As to quaternary structure, component of the TIM23 complex at least composed of TIMM23, TIMM17 (TIMM17A or TIMM17B) and TIMM50; within this complex, directly interacts with TIMM23. The complex interacts with the TIMM44 component of the PAM complex and with DNAJC15. In terms of assembly, interacts with COIL and snRNPs. Widely expressed. Expressed at higher level in brain, kidney and liver (at protein level).

It is found in the mitochondrion inner membrane. Its subcellular location is the nucleus speckle. In terms of biological role, essential component of the TIM23 complex, a complex that mediates the translocation of transit peptide-containing proteins across the mitochondrial inner membrane. Has some phosphatase activity in vitro; however such activity may not be relevant in vivo. Functionally, may participate in the release of snRNPs and SMN from the Cajal body. The protein is Mitochondrial import inner membrane translocase subunit TIM50 (TIMM50) of Homo sapiens (Human).